The primary structure comprises 246 residues: Exosome complex component Rrp41 (246 aa).

This sequence belongs to the RNase PH family. Rrp41 subfamily. Component of the archaeal exosome complex. Forms a hexameric ring-like arrangement composed of 3 Rrp41-Rrp42 heterodimers. The hexameric ring associates with a trimer of Rrp4 and/or Csl4 subunits.

It localises to the cytoplasm. Its function is as follows. Catalytic component of the exosome, which is a complex involved in RNA degradation. Has 3'-&gt;5' exoribonuclease activity. Can also synthesize heteromeric RNA-tails. This chain is Exosome complex component Rrp41, found in Pyrobaculum arsenaticum (strain DSM 13514 / JCM 11321 / PZ6).